The following is a 151-amino-acid chain: D-aminoacyl-tRNA deacylase (151 aa).

The Gly-cisPro motif, important for rejection of L-amino acids motif lies at 138–139; that stretch reads GP.

It belongs to the DTD family. In terms of assembly, homodimer.

The protein resides in the cytoplasm. It carries out the reaction glycyl-tRNA(Ala) + H2O = tRNA(Ala) + glycine + H(+). The catalysed reaction is a D-aminoacyl-tRNA + H2O = a tRNA + a D-alpha-amino acid + H(+). Functionally, an aminoacyl-tRNA editing enzyme that deacylates mischarged D-aminoacyl-tRNAs. Also deacylates mischarged glycyl-tRNA(Ala), protecting cells against glycine mischarging by AlaRS. Acts via tRNA-based rather than protein-based catalysis; rejects L-amino acids rather than detecting D-amino acids in the active site. By recycling D-aminoacyl-tRNA to D-amino acids and free tRNA molecules, this enzyme counteracts the toxicity associated with the formation of D-aminoacyl-tRNA entities in vivo and helps enforce protein L-homochirality. In Picosynechococcus sp. (strain ATCC 27264 / PCC 7002 / PR-6) (Agmenellum quadruplicatum), this protein is D-aminoacyl-tRNA deacylase.